The primary structure comprises 321 residues: Lipoyl synthase (321 aa).

The [4Fe-4S] cluster site is built by Cys-68, Cys-73, Cys-79, Cys-94, Cys-98, Cys-101, and Ser-308. The Radical SAM core domain occupies 80–297 (FNHGTATFMI…KELAESIGFT (218 aa)).

The protein belongs to the radical SAM superfamily. Lipoyl synthase family. [4Fe-4S] cluster serves as cofactor.

It is found in the cytoplasm. The catalysed reaction is [[Fe-S] cluster scaffold protein carrying a second [4Fe-4S](2+) cluster] + N(6)-octanoyl-L-lysyl-[protein] + 2 oxidized [2Fe-2S]-[ferredoxin] + 2 S-adenosyl-L-methionine + 4 H(+) = [[Fe-S] cluster scaffold protein] + N(6)-[(R)-dihydrolipoyl]-L-lysyl-[protein] + 4 Fe(3+) + 2 hydrogen sulfide + 2 5'-deoxyadenosine + 2 L-methionine + 2 reduced [2Fe-2S]-[ferredoxin]. It participates in protein modification; protein lipoylation via endogenous pathway; protein N(6)-(lipoyl)lysine from octanoyl-[acyl-carrier-protein]: step 2/2. Functionally, catalyzes the radical-mediated insertion of two sulfur atoms into the C-6 and C-8 positions of the octanoyl moiety bound to the lipoyl domains of lipoate-dependent enzymes, thereby converting the octanoylated domains into lipoylated derivatives. The protein is Lipoyl synthase of Shewanella pealeana (strain ATCC 700345 / ANG-SQ1).